The sequence spans 317 residues: Electron transfer flavoprotein subunit alpha (317 aa).

Belongs to the ETF alpha-subunit/FixB family. Heterodimer of an alpha and a beta subunit. The cofactor is FAD.

It is found in the cytoplasm. It participates in lipid metabolism; butanoate metabolism. Its function is as follows. Part of an electron transfer flavoprotein involved in syntrophic growth of S.wolfei with butyrate. Probably receives electrons from butyryl-CoA dehydrogenases, and transfers them to the membrane-bound quinone oxidoreductase Swol_0698. The chain is Electron transfer flavoprotein subunit alpha from Syntrophomonas wolfei subsp. wolfei (strain DSM 2245B / Goettingen).